We begin with the raw amino-acid sequence, 466 residues long: MMMLNPSNGGIEGEKMKKKAKVVVIMGPTGSGKSKLAVDLASHFPVEIINADAMQIYSGLDVLTNKVTVDEQKGVPHHLLGTVSSDMEFTARDFRDFTVPLIEEIVSRNHIPVLVGGTHYYIQAVVSKFLLDDAAEDTEECCADVASVVDQDMVVESVFGRDDLSHGYELLKELDPVAANRIHPNNHRKINQYLSLHASRGVLPSKLYQGKTAENWGCINASRFDYCLICMDAETAVLDRYVEQRVDAMVDAGLLDEVYDIYKPGADYTRGLRQSIGVREFEDFLKIHLSETCAGHLTSLSNDDKVMKENLRKILNFPKDDKLRIMLEEAIDRVKLNTRRLLRRQKRRVSRLETVFGWNIHYIDATEYILSKSEESWNAQVVKPASEIIRCFLETETESGRDPTSGKSIERDLWTQYVCEACGNKILRGRHEWEHHKQGRTHRKRTTRHKNSQTYKNREVQEAEVN.

27–34 (GPTGSGKS) is a binding site for ATP. Position 29 to 34 (29 to 34 (TGSGKS)) interacts with substrate. Residues 52–55 (DAMQ) are interaction with substrate tRNA. The disordered stretch occupies residues 433 to 466 (WEHHKQGRTHRKRTTRHKNSQTYKNREVQEAEVN). Residues 437 to 451 (KQGRTHRKRTTRHKN) are compositionally biased toward basic residues. The segment covering 456 to 466 (KNREVQEAEVN) has biased composition (basic and acidic residues).

It belongs to the IPP transferase family. Mg(2+) serves as cofactor. As to expression, expressed ubiquitously, with highest expression in proliferating tissues.

It localises to the cytoplasm. It carries out the reaction adenosine(37) in tRNA + dimethylallyl diphosphate = N(6)-dimethylallyladenosine(37) in tRNA + diphosphate. In terms of biological role, catalyzes the transfer of a dimethylallyl group onto the adenine at position 37 in tRNAs that read codons beginning with uridine, leading to the formation of N6-(dimethylallyl)adenosine (i(6)A). Involved in the cis-type cytokinin biosynthesis. This chain is tRNA dimethylallyltransferase 2 (IPT2), found in Arabidopsis thaliana (Mouse-ear cress).